The primary structure comprises 356 residues: UDP-N-acetylglucosamine--N-acetylmuramyl-(pentapeptide) pyrophosphoryl-undecaprenol N-acetylglucosamine transferase (356 aa).

Residues serine 198 and glutamine 289 each contribute to the UDP-N-acetyl-alpha-D-glucosamine site.

It belongs to the glycosyltransferase 28 family. MurG subfamily.

Its subcellular location is the cell membrane. The catalysed reaction is Mur2Ac(oyl-L-Ala-gamma-D-Glu-L-Lys-D-Ala-D-Ala)-di-trans,octa-cis-undecaprenyl diphosphate + UDP-N-acetyl-alpha-D-glucosamine = beta-D-GlcNAc-(1-&gt;4)-Mur2Ac(oyl-L-Ala-gamma-D-Glu-L-Lys-D-Ala-D-Ala)-di-trans,octa-cis-undecaprenyl diphosphate + UDP + H(+). Its pathway is cell wall biogenesis; peptidoglycan biosynthesis. Its function is as follows. Cell wall formation. Catalyzes the transfer of a GlcNAc subunit on undecaprenyl-pyrophosphoryl-MurNAc-pentapeptide (lipid intermediate I) to form undecaprenyl-pyrophosphoryl-MurNAc-(pentapeptide)GlcNAc (lipid intermediate II). The sequence is that of UDP-N-acetylglucosamine--N-acetylmuramyl-(pentapeptide) pyrophosphoryl-undecaprenol N-acetylglucosamine transferase from Streptococcus thermophilus (strain ATCC BAA-491 / LMD-9).